Reading from the N-terminus, the 650-residue chain is MSSQSLYKVSGNIAANALVNNDQYKKMYQESIVNPEGFWREHGKRIDWIKPYTKIKKTSFDDHNLSINWFYDGTLNASANCLDRHLAEHSDRVAIIWEGDNASEQRKITYGELHTQVCKFANALRSQGVRRGDIVTIYMPMVPEAAVAMLACARIGAVHSVVFGGFSPDSIASRVIDGKSKVVITADEGMRGGRAIPLKRNIDDALKHPDVTSVEKVIVLKRTGGKVDWIEGRDVWWHSLVETASEHCAVEEMGAEDPLFLLYTSGSTGNPKGVLHTTGGYMVYASMTHEYVFDYKPGEIYWCTADVGWITGHSYMVYGPLANGATVLIHEGIPNHPSPARLGEMIDRHKVNILYTAPTLIRALMAEGKQHFDKYDGSSLRIMGSVGEPINPEAWRWYHEVIGHEHCPIVDTWWQTETGGILITPLPGATDTKPGSATRPFFGVQPALVDNMGNILEGATEGNLVLLDSWPGQMRTVYGDHERFVLTYFKTFRGMYFTGDGARRDEDGYYWITGRVDDVINVSGHRLGTAEVESALVSHELVAEAAVVGYPHDIKGQGIYAYVTLTRGTEESEELRQELRQWVRKEIGALATPDLIQWATGLPKTRSGKIMRRFLRKIAANEVTNLGDASTLADPAVIETLIETRLNRNE.

Residues 191–194, threonine 311, and asparagine 335 contribute to the CoA site; that span reads RGGR. ATP contacts are provided by residues 387-389, 411-416, aspartate 500, and arginine 515; these read GEP and DTWWQT. Serine 523 is a binding site for CoA. Residue arginine 526 participates in ATP binding. Valine 537, histidine 539, and valine 542 together coordinate Mg(2+). Arginine 584 contributes to the CoA binding site. N6-acetyllysine is present on lysine 609.

Belongs to the ATP-dependent AMP-binding enzyme family. Requires Mg(2+) as cofactor. Acetylated. Deacetylation by the SIR2-homolog deacetylase activates the enzyme.

The catalysed reaction is acetate + ATP + CoA = acetyl-CoA + AMP + diphosphate. Its function is as follows. Catalyzes the conversion of acetate into acetyl-CoA (AcCoA), an essential intermediate at the junction of anabolic and catabolic pathways. AcsA undergoes a two-step reaction. In the first half reaction, AcsA combines acetate with ATP to form acetyl-adenylate (AcAMP) intermediate. In the second half reaction, it can then transfer the acetyl group from AcAMP to the sulfhydryl group of CoA, forming the product AcCoA. The protein is Acetyl-coenzyme A synthetase of Shewanella sp. (strain MR-4).